The chain runs to 436 residues: Serine--tRNA ligase (436 aa).

The segment covering 43 to 55 has biased composition (basic and acidic residues); the sequence is TKSEQLKQKRNEV. The disordered stretch occupies residues 43–68; sequence TKSEQLKQKRNEVSDQIAQAKRNKED. 237–239 serves as a coordination point for L-serine; it reads TAE. 268-270 contributes to the ATP binding site; sequence RSE. E291 serves as a coordination point for L-serine. 355 to 358 contacts ATP; sequence EISS. S390 serves as a coordination point for L-serine.

This sequence belongs to the class-II aminoacyl-tRNA synthetase family. Type-1 seryl-tRNA synthetase subfamily. As to quaternary structure, homodimer. The tRNA molecule binds across the dimer.

Its subcellular location is the cytoplasm. It carries out the reaction tRNA(Ser) + L-serine + ATP = L-seryl-tRNA(Ser) + AMP + diphosphate + H(+). It catalyses the reaction tRNA(Sec) + L-serine + ATP = L-seryl-tRNA(Sec) + AMP + diphosphate + H(+). It participates in aminoacyl-tRNA biosynthesis; selenocysteinyl-tRNA(Sec) biosynthesis; L-seryl-tRNA(Sec) from L-serine and tRNA(Sec): step 1/1. Functionally, catalyzes the attachment of serine to tRNA(Ser). Is also able to aminoacylate tRNA(Sec) with serine, to form the misacylated tRNA L-seryl-tRNA(Sec), which will be further converted into selenocysteinyl-tRNA(Sec). This is Serine--tRNA ligase from Lactobacillus johnsonii (strain CNCM I-12250 / La1 / NCC 533).